Consider the following 240-residue polypeptide: Nudix hydrolase 3 (240 aa).

The region spanning 50–190 (NSAMSVLIPL…RMKYTLPSFD (141 aa)) is the Nudix hydrolase domain. The short motif at 89-110 (GRMDPGETTTETALRETFEEIG) is the Nudix box element. Positions 104 and 108 each coordinate Mg(2+).

It belongs to the Nudix hydrolase family. PCD1 subfamily. The cofactor is Mn(2+). Mg(2+) is required as a cofactor.

Its function is as follows. Probably mediates the hydrolysis of some nucleoside diphosphate derivatives. This Caenorhabditis elegans protein is Nudix hydrolase 3 (ndx-3).